Consider the following 121-residue polypeptide: Small ribosomal subunit protein uS13 (121 aa).

Residues 92–121 (RKGLPMRGQRTRTNARTRKGPRRAAQALKK) are disordered.

The protein belongs to the universal ribosomal protein uS13 family. In terms of assembly, part of the 30S ribosomal subunit. Forms a loose heterodimer with protein S19. Forms two bridges to the 50S subunit in the 70S ribosome.

Its function is as follows. Located at the top of the head of the 30S subunit, it contacts several helices of the 16S rRNA. In the 70S ribosome it contacts the 23S rRNA (bridge B1a) and protein L5 of the 50S subunit (bridge B1b), connecting the 2 subunits; these bridges are implicated in subunit movement. Contacts the tRNAs in the A and P-sites. The protein is Small ribosomal subunit protein uS13 of Burkholderia cenocepacia (strain HI2424).